The sequence spans 353 residues: 3-isopropylmalate dehydrogenase (353 aa).

An NAD(+)-binding site is contributed by 76 to 89 (GPKWDDPRAKVRPE). Substrate-binding residues include arginine 96, arginine 106, arginine 134, and aspartate 223. 3 residues coordinate Mg(2+): aspartate 223, aspartate 247, and aspartate 251. 281 to 293 (GSAPDIAGKGIAN) serves as a coordination point for NAD(+).

It belongs to the isocitrate and isopropylmalate dehydrogenases family. LeuB type 1 subfamily. Homodimer. The cofactor is Mg(2+). Mn(2+) serves as cofactor.

Its subcellular location is the cytoplasm. The catalysed reaction is (2R,3S)-3-isopropylmalate + NAD(+) = 4-methyl-2-oxopentanoate + CO2 + NADH. The protein operates within amino-acid biosynthesis; L-leucine biosynthesis; L-leucine from 3-methyl-2-oxobutanoate: step 3/4. Catalyzes the oxidation of 3-carboxy-2-hydroxy-4-methylpentanoate (3-isopropylmalate) to 3-carboxy-4-methyl-2-oxopentanoate. The product decarboxylates to 4-methyl-2 oxopentanoate. The sequence is that of 3-isopropylmalate dehydrogenase from Anaeromyxobacter dehalogenans (strain 2CP-C).